A 101-amino-acid polypeptide reads, in one-letter code: MMISGVEISEKSGSAVFRLKAQPRSSKSAISGAYNGGVKVNLKAAPVDDAANRECCDLFAKVLSVSSSRLTILSGKSSKNKTIKVEGLGAEEVALLLRPYL.

This sequence belongs to the UPF0235 family.

The chain is UPF0235 protein Cpha266_2081 from Chlorobium phaeobacteroides (strain DSM 266 / SMG 266 / 2430).